Here is a 78-residue protein sequence, read N- to C-terminus: DNA-directed RNA polymerase subunit Rpo5 (78 aa).

This sequence belongs to the archaeal Rpo5/eukaryotic RPB5 RNA polymerase subunit family. Part of the RNA polymerase complex.

It localises to the cytoplasm. It catalyses the reaction RNA(n) + a ribonucleoside 5'-triphosphate = RNA(n+1) + diphosphate. In terms of biological role, DNA-dependent RNA polymerase (RNAP) catalyzes the transcription of DNA into RNA using the four ribonucleoside triphosphates as substrates. The protein is DNA-directed RNA polymerase subunit Rpo5 of Methanosarcina mazei (strain ATCC BAA-159 / DSM 3647 / Goe1 / Go1 / JCM 11833 / OCM 88) (Methanosarcina frisia).